We begin with the raw amino-acid sequence, 238 residues long: Large ribosomal subunit protein uL1 (238 aa).

Belongs to the universal ribosomal protein uL1 family. Part of the 50S ribosomal subunit.

Functionally, binds directly to 23S rRNA. The L1 stalk is quite mobile in the ribosome, and is involved in E site tRNA release. Its function is as follows. Protein L1 is also a translational repressor protein, it controls the translation of the L11 operon by binding to its mRNA. The polypeptide is Large ribosomal subunit protein uL1 (Trichodesmium erythraeum (strain IMS101)).